We begin with the raw amino-acid sequence, 377 residues long: tRNA-specific 2-thiouridylase MnmA (377 aa).

Residues 8 to 15 (GMSGGVDS) and M34 contribute to the ATP site. The tract at residues 94-96 (NPD) is interaction with target base in tRNA. C99 serves as the catalytic Nucleophile. C99 and C201 are disulfide-bonded. Position 123 (G123) interacts with ATP. The interval 151–153 (KDQ) is interaction with tRNA. The active-site Cysteine persulfide intermediate is C201. The interval 315–316 (RY) is interaction with tRNA.

This sequence belongs to the MnmA/TRMU family.

It localises to the cytoplasm. The enzyme catalyses S-sulfanyl-L-cysteinyl-[protein] + uridine(34) in tRNA + AH2 + ATP = 2-thiouridine(34) in tRNA + L-cysteinyl-[protein] + A + AMP + diphosphate + H(+). Catalyzes the 2-thiolation of uridine at the wobble position (U34) of tRNA, leading to the formation of s(2)U34. The polypeptide is tRNA-specific 2-thiouridylase MnmA (Acinetobacter baumannii (strain AB307-0294)).